The chain runs to 2098 residues: Non-reducing polyketide synthase crz7 (2098 aa).

In terms of domain architecture, Starter acyltransferase (SAT) spans isoleucine 8–histidine 243. Residues serine 364–aspartate 789 enclose the Ketosynthase family 3 (KS3) domain. Residues cysteine 532, histidine 667, and histidine 706 each act as for beta-ketoacyl synthase activity in the active site. The 325-residue stretch at isoleucine 887–lysine 1211 folds into the Malonyl-CoA:ACP transacylase (MAT) domain. Positions threonine 1270–glutamine 1404 are N-terminal hotdog fold. One can recognise a PKS/mFAS DH domain in the interval threonine 1270 to glutamine 1578. Residue histidine 1305 is the Proton acceptor; for dehydratase activity of the active site. Positions isoleucine 1431–glutamine 1578 are C-terminal hotdog fold. Aspartate 1491 serves as the catalytic Proton donor; for dehydratase activity. Positions glutamine 1613–methionine 1690 constitute a Carrier 1 domain. Residue serine 1650 is modified to O-(pantetheine 4'-phosphoryl)serine. The segment at proline 1693–proline 1725 is disordered. Residues asparagine 1698–proline 1711 show a composition bias toward acidic residues. Positions serine 1714–threonine 1724 are enriched in polar residues. The region spanning proline 1725–serine 1802 is the Carrier 2 domain. The residue at position 1762 (serine 1762) is an O-(pantetheine 4'-phosphoryl)serine. The tract at residues leucine 1844–phenylalanine 2080 is thioesterase (TE) domain.

Pantetheine 4'-phosphate serves as cofactor.

It participates in secondary metabolite biosynthesis. Functionally, non-reducing polyketide synthase; part of the gene cluster that mediates the biosynthesis of the red pigment cristazarin, a naphthazarin derivative. The polyketide product of crz7 is likely 2-acetyl-1,3,6,8-tetrahydoxynaphthalene (AT4HN) from which a probable biosynthetic route of cristazarin can be deduced. The presence of two O-methyltransferases (crz1 and crz2), an enoyl reductase (crz5), an oxidase (crz8), and a short-chain dehydrogenase (crz9) encoded in the cristazarin biosynthetic cluster is consistent with methylation of a hydroxyl group, addition of two hydroxyl groups to the naphthalene core ring, and reduction of the acetyl side chain. This chain is Non-reducing polyketide synthase crz7, found in Cladonia metacorallifera (Lichen-forming fungus).